A 559-amino-acid polypeptide reads, in one-letter code: Poly [ADP-ribose] polymerase 2 (559 aa).

The interval 1-58 (MAPRRQRSGSGRRVLNEAKKVDNGNKATEDDSPPGKKMRTCQRKGPMAGGKDADRTKD) is disordered. Residues 1-83 (MAPRRQRSGS…VDPECAAKLG (83 aa)) are N-terminal region (NTR). Basic and acidic residues predominate over residues 14–29 (VLNEAKKVDNGNKATE). 2 consecutive short sequence motifs (nuclear localization signal) follow at residues 19–20 (KK) and 33–39 (PPGKKMR). An N6-(ADP-ribosyl)lysine; alternate mark is found at lysine 36 and lysine 37. Lysine 36 and lysine 37 each carry N6-acetyllysine; alternate. Positions 84-181 (KAHVYCEGDD…ENFEKVPGKY (98 aa)) constitute a WGR domain. The region spanning 207 to 324 (ESQLDLRVQE…DIEIALKLVK (118 aa)) is the PARP alpha-helical domain. At serine 208 the chain carries Phosphoserine. The PARP catalytic domain occupies 332 to 559 (HPLDQHYRNL…KIQFNFLQLW (228 aa)). Residues 404 to 406 (HGS), glycine 413, arginine 420, and serine 446 each bind NAD(+). Glutamate 534 serves as the catalytic For poly [ADP-ribose] polymerase activity.

This sequence belongs to the ARTD/PARP family. In terms of assembly, component of a base excision repair (BER) complex, containing at least XRCC1, PARP1, POLB and LRIG3. Homo- and heterodimer with PARP1. Interacts (via the PARP catalytic domain) with HPF1. Interacts with core nucleosomes. Post-translationally, auto poly-ADP-ribosylated on serine residues, leading to dissociation of the PARP2-HPF1 complex from chromatin. Poly-ADP-ribosylated by PARP1. Acetylation reduces DNA binding and enzymatic activity. In terms of processing, proteolytically cleaved by caspase-8 (CASP8) in response to apoptosis, leading to its inactivation. Widely expressed; the highest levels were in testis followed by ovary. Expression is correlated with proliferation, with higher levels occurring during early fetal development and organogenesis and in the highly proliferative cell compartments of adult.

It is found in the nucleus. Its subcellular location is the chromosome. It catalyses the reaction NAD(+) + (ADP-D-ribosyl)n-acceptor = nicotinamide + (ADP-D-ribosyl)n+1-acceptor + H(+).. It carries out the reaction L-seryl-[protein] + NAD(+) = O-(ADP-D-ribosyl)-L-seryl-[protein] + nicotinamide + H(+). The enzyme catalyses L-aspartyl-[protein] + NAD(+) = 4-O-(ADP-D-ribosyl)-L-aspartyl-[protein] + nicotinamide. The catalysed reaction is L-glutamyl-[protein] + NAD(+) = 5-O-(ADP-D-ribosyl)-L-glutamyl-[protein] + nicotinamide. ADP-ribosyltransferase activity is regulated via an allosteric activation mechanism. In absence of activation signal, PARP2 is autoinhibited by the PARP alpha-helical domain (also named HD region), which prevents effective NAD(+)-binding. Activity is highly stimulated by signals, which unfold the PARP alpha-helical domain, relieving autoinhibition. Poly-ADP-ribosyltransferase activity is tightly regulated and PARP2 is removed from damaged chromatin following initial poly-ADP-ribosylation of chromatin to avoid prolonged residence (trapping) that has cytotoxic consequences. CHD1L promotes PARP2 removal from chromatin. Its function is as follows. Poly-ADP-ribosyltransferase that mediates poly-ADP-ribosylation of proteins and plays a key role in DNA repair. Mediates glutamate, aspartate or serine ADP-ribosylation of proteins: the ADP-D-ribosyl group of NAD(+) is transferred to the acceptor carboxyl group of target residues and further ADP-ribosyl groups are transferred to the 2'-position of the terminal adenosine moiety, building up a polymer with an average chain length of 20-30 units. Serine ADP-ribosylation of proteins constitutes the primary form of ADP-ribosylation of proteins in response to DNA damage. Mediates glutamate and aspartate ADP-ribosylation of target proteins in absence of HPF1. Following interaction with HPF1, catalyzes serine ADP-ribosylation of target proteins; HPF1 conferring serine specificity by completing the PARP2 active site. PARP2 initiates the repair of double-strand DNA breaks: recognizes and binds DNA breaks within chromatin and recruits HPF1, licensing serine ADP-ribosylation of target proteins, such as histones, thereby promoting decompaction of chromatin and the recruitment of repair factors leading to the reparation of DNA strand breaks. HPF1 initiates serine ADP-ribosylation but restricts the polymerase activity of PARP2 in order to limit the length of poly-ADP-ribose chains. Specifically mediates formation of branched poly-ADP-ribosylation. Branched poly-ADP-ribose chains are specifically recognized by some factors, such as APLF. In addition to proteins, also able to ADP-ribosylate DNA: preferentially acts on 5'-terminal phosphates at DNA strand breaks termini in nicked duplex. This is Poly [ADP-ribose] polymerase 2 (Parp2) from Mus musculus (Mouse).